The following is a 137-amino-acid chain: Peptide methionine sulfoxide reductase MsrB (137 aa).

The MsrB domain maps to 7–129 (AEELKKNLSE…NSASLRFTDG (123 aa)). Zn(2+) contacts are provided by cysteine 46, cysteine 49, cysteine 95, and cysteine 98. Cysteine 118 functions as the Nucleophile in the catalytic mechanism.

It belongs to the MsrB Met sulfoxide reductase family. Requires Zn(2+) as cofactor.

It catalyses the reaction L-methionyl-[protein] + [thioredoxin]-disulfide + H2O = L-methionyl-(R)-S-oxide-[protein] + [thioredoxin]-dithiol. The protein is Peptide methionine sulfoxide reductase MsrB of Escherichia coli O45:K1 (strain S88 / ExPEC).